The primary structure comprises 213 residues: Kynurenine formamidase (213 aa).

W18 provides a ligand contact to substrate. Residues H48, H52, and D54 each contribute to the Zn(2+) site. Residue H58 is the Proton donor/acceptor of the active site. Zn(2+) is bound by residues H160 and E172.

The protein belongs to the Cyclase 1 superfamily. KynB family. In terms of assembly, homodimer. Zn(2+) serves as cofactor.

It catalyses the reaction N-formyl-L-kynurenine + H2O = L-kynurenine + formate + H(+). It participates in amino-acid degradation; L-tryptophan degradation via kynurenine pathway; L-kynurenine from L-tryptophan: step 2/2. Its function is as follows. Catalyzes the hydrolysis of N-formyl-L-kynurenine to L-kynurenine, the second step in the kynurenine pathway of tryptophan degradation. In Burkholderia pseudomallei (strain 1106a), this protein is Kynurenine formamidase.